The following is a 365-amino-acid chain: Chorismate synthase (365 aa).

Residues Ile-41 to Gly-51 show a composition bias toward basic and acidic residues. The tract at residues Ile-41–Ala-62 is disordered. Arg-48 serves as a coordination point for NADP(+). FMN contacts are provided by residues Arg-125–Ser-127, Gly-285, Lys-300–Ser-304, and Arg-327.

Belongs to the chorismate synthase family. It depends on FMNH2 as a cofactor.

It catalyses the reaction 5-O-(1-carboxyvinyl)-3-phosphoshikimate = chorismate + phosphate. It participates in metabolic intermediate biosynthesis; chorismate biosynthesis; chorismate from D-erythrose 4-phosphate and phosphoenolpyruvate: step 7/7. Its function is as follows. Catalyzes the anti-1,4-elimination of the C-3 phosphate and the C-6 proR hydrogen from 5-enolpyruvylshikimate-3-phosphate (EPSP) to yield chorismate, which is the branch point compound that serves as the starting substrate for the three terminal pathways of aromatic amino acid biosynthesis. This reaction introduces a second double bond into the aromatic ring system. This is Chorismate synthase from Methanosarcina mazei (strain ATCC BAA-159 / DSM 3647 / Goe1 / Go1 / JCM 11833 / OCM 88) (Methanosarcina frisia).